A 20-amino-acid polypeptide reads, in one-letter code: VDDTTPLSEETMMRIGGYMV.

As to quaternary structure, disulfide-linked heterodimer of A and B chains.

Functionally, gal / GalNAc-specific lectin. Agglutinates both native and trypsin-treated rabbit erythrocytes but not human erythrocytes irrespective of blood group type. The chain is N-acetyl-D-galactosamine-binding lectin subunit B from Iris hollandica (Dutch iris).